A 444-amino-acid polypeptide reads, in one-letter code: Glutamate-1-semialdehyde 2,1-aminomutase (444 aa).

N6-(pyridoxal phosphate)lysine is present on Lys267.

Belongs to the class-III pyridoxal-phosphate-dependent aminotransferase family. HemL subfamily. In terms of assembly, homodimer. Pyridoxal 5'-phosphate serves as cofactor.

Its subcellular location is the cytoplasm. It catalyses the reaction (S)-4-amino-5-oxopentanoate = 5-aminolevulinate. Its pathway is porphyrin-containing compound metabolism; protoporphyrin-IX biosynthesis; 5-aminolevulinate from L-glutamyl-tRNA(Glu): step 2/2. The sequence is that of Glutamate-1-semialdehyde 2,1-aminomutase from Xylella fastidiosa (strain M12).